We begin with the raw amino-acid sequence, 244 residues long: Probable transcriptional regulatory protein Dgeo_2194 (244 aa).

Positions 1 to 21 (MAGHSKWAQIKRKKGANDKKR) are disordered.

The protein belongs to the TACO1 family.

It localises to the cytoplasm. The sequence is that of Probable transcriptional regulatory protein Dgeo_2194 from Deinococcus geothermalis (strain DSM 11300 / CIP 105573 / AG-3a).